Consider the following 716-residue polypeptide: MPLNFPLRIRFFAHSLSGTHLSYNTSSSVPLLFRIFSSGLNHFEFGSRINFSTRPNRDQPEFERRIRDGGEIRASKSLIEDEEELSNWVSGFRTGSSRGILKSDDEDEEDRSRGRNQEKRGIRNQVDSFRNKRYGGDRERGFNSRIQGKSSEASFRGRKETSFSRDREDEKGLRKREDLRLEDESSDEDVKSLVMGDIGDLLSEDDEEEDQDYDFLKKKAVSAFGFDKENVIEADKTRNANDSYLTKTRFDHYPLSPLSLKAIKDAGYETMTVVQEATLPIILKGKDVLAKAKTGTGKTVAFLLPSIEVVVKSPPTSPDNKRPPILALVICPTRELANQAATEANTLLKYHPSIGVQVVIGGTRLGLEQKRMQTNPCQILVATPGRLKDHIENTPGFATRLKGVKVLVLDEADHLLDMGFRKDIERIISAVPKERQTFLFSATVPEEVRQICLVALRRDHEFVNCVHEGTIETHQQVRQMHMIASLDRHFSLLYTLLREHIMGNVDYKVIVFCTTAMVTKLVADLLGELNLNVREIHSRKPQSYRTRVSNEFRKSKGLILVTSDVSARGVDYPDVTLVLQVGLPKDREQYIHRLGRTGRKGKEGEGILLLAPWEEYFLSSLKDLPITKSPLPSIDPETVKKVQKALCHVEMRNKEAAYQAWLGYYNSQKMIGRDKDRLVELANEFSRSMGLDNPPAIPKLILGKMGLKNVPGLRAK.

The disordered stretch occupies residues 99–188; it reads GILKSDDEDE…LRLEDESSDE (90 aa). Residues 110-121 show a composition bias toward basic and acidic residues; sequence DRSRGRNQEKRG. Polar residues predominate over residues 144–153; that stretch reads SRIQGKSSEA. A compositionally biased stretch (basic and acidic residues) spans 155 to 188; the sequence is FRGRKETSFSRDREDEKGLRKREDLRLEDESSDE. Positions 248–276 match the Q motif motif; the sequence is TRFDHYPLSPLSLKAIKDAGYETMTVVQE. The Helicase ATP-binding domain occupies 279–462; the sequence is LPIILKGKDV…LVALRRDHEF (184 aa). 292–299 is an ATP binding site; that stretch reads AKTGTGKT. A DEAD box motif is present at residues 410 to 413; that stretch reads DEAD. The region spanning 497-643 is the Helicase C-terminal domain; sequence LREHIMGNVD…IDPETVKKVQ (147 aa).

The protein belongs to the DEAD box helicase family.

The catalysed reaction is ATP + H2O = ADP + phosphate + H(+). This is DEAD-box ATP-dependent RNA helicase 31 (RH31) from Arabidopsis thaliana (Mouse-ear cress).